The chain runs to 227 residues: UMP-CMP kinase (227 aa).

35 to 40 (GAGKGT) contacts ATP. The NMP stretch occupies residues 55-85 (SAGDLLRAEQHREGSEYGQLIQTCIKEGSIV). Residues Arg-61, 83 to 85 (SIV), 122 to 125 (GFPR), and Gln-129 contribute to the a ribonucleoside 5'-phosphate site. The segment at 159 to 169 (ERGKTSGREDD) is LID. Residue Arg-160 participates in ATP binding. Residues Arg-166 and Arg-177 each coordinate a ribonucleoside 5'-phosphate. Residue Val-205 coordinates ATP.

This sequence belongs to the adenylate kinase family. UMP-CMP kinase subfamily. In terms of assembly, monomer. It depends on Mg(2+) as a cofactor.

The protein resides in the cytoplasm. The protein localises to the nucleus. It carries out the reaction UMP + ATP = UDP + ADP. In terms of biological role, catalyzes the phosphorylation of pyrimidine nucleoside monophosphates at the expense of ATP. Plays an important role in de novo pyrimidine nucleotide biosynthesis. Has preference for UMP and CMP as phosphate acceptors, but can also use AMP and dCMP to a lesser extent. May play a role during the formation of basidiospores in the gill tissue. The protein is UMP-CMP kinase (uck1) of Lentinula edodes (Shiitake mushroom).